An 863-amino-acid polypeptide reads, in one-letter code: Linoleate 9S-lipoxygenase 1 (863 aa).

One can recognise a PLAT domain in the interval 32–158; it reads RDFTASLLDN…KYHYNRIFFA (127 aa). The region spanning 161-863 is the Lipoxygenase domain; sequence SYLPSQMPEA…ARGIPNSISI (703 aa). Residues 204–244 form a disordered region; the sequence is NDLGEPDRDNPRPVLGGSQKHPYPRRGRTGRIPTKKDPNSE. Fe cation is bound by residues His518, His523, His709, Asn713, and Ile863.

Belongs to the lipoxygenase family. As to quaternary structure, monomer. Fe cation is required as a cofactor.

Its subcellular location is the cytoplasm. It catalyses the reaction (9Z,12Z)-octadecadienoate + O2 = (9S)-hydroperoxy-(10E,12Z)-octadecadienoate. Its pathway is lipid metabolism; oxylipin biosynthesis. Its function is as follows. Plant lipoxygenase may be involved in a number of diverse aspects of plant physiology including growth and development, pest resistance, and senescence or responses to wounding. This lipoxygenase introduces molecular oxygen exclusively into the C-9 position of linoleic and linolenic. In Oryza sativa subsp. japonica (Rice), this protein is Linoleate 9S-lipoxygenase 1.